A 491-amino-acid polypeptide reads, in one-letter code: Chromosomal replication initiator protein DnaA (491 aa).

The domain I, interacts with DnaA modulators stretch occupies residues 1-69 (MTTWDKCLKK…TIQECHGNDL (69 aa)). The tract at residues 69–154 (LIIEYSNKKF…KEDEEYSFGL (86 aa)) is domain II. The interval 155-371 (PLKEKYVFDS…GALNRVLTTS (217 aa)) is domain III, AAA+ region. ATP is bound by residues Gly199, Gly201, Lys202, and Thr203. Positions 372–491 (KFNHKDPTIE…YELLLDKISR (120 aa)) are domain IV, binds dsDNA.

Belongs to the DnaA family. In terms of assembly, oligomerizes as a right-handed, spiral filament on DNA at oriC.

The protein resides in the cytoplasm. In terms of biological role, plays an essential role in the initiation and regulation of chromosomal replication. ATP-DnaA binds to the origin of replication (oriC) to initiate formation of the DNA replication initiation complex once per cell cycle. Binds the DnaA box (a 9 base pair repeat at the origin) and separates the double-stranded (ds)DNA. Forms a right-handed helical filament on oriC DNA; dsDNA binds to the exterior of the filament while single-stranded (ss)DNA is stabiized in the filament's interior. The ATP-DnaA-oriC complex binds and stabilizes one strand of the AT-rich DNA unwinding element (DUE), permitting loading of DNA polymerase. After initiation quickly degrades to an ADP-DnaA complex that is not apt for DNA replication. Binds acidic phospholipids. The sequence is that of Chromosomal replication initiator protein DnaA from Francisella tularensis subsp. holarctica (strain OSU18).